A 222-amino-acid chain; its full sequence is Ribonuclease S-3 (222 aa).

An N-terminal signal peptide occupies residues 1-22 (MVHVVMMVFLLIVLILCSSTVG). Gln31 is an RNA binding site. Cysteines 37 and 44 form a disulfide. The N-linked (GlcNAc...) asparagine glycan is linked to Asn40. Residues His55, 92–93 (NV), Phe102, 105–106 (KE), and 109–110 (KH) each bind RNA. His55 (proton donor) is an active-site residue. Cysteines 70 and 113 form a disulfide. Residues Glu106 and Lys109 contribute to the active site. His110 functions as the Proton acceptor in the catalytic mechanism. The N-linked (GlcNAc...) asparagine glycan is linked to Asn138. Intrachain disulfides connect Cys177–Cys215 and Cys192–Cys203.

This sequence belongs to the RNase T2 family. Post-translationally, N-linked core structure at Asn-138 contains xylose.

The enzyme catalyses a ribonucleotidyl-ribonucleotide-RNA + H2O = a 3'-end 3'-phospho-ribonucleotide-RNA + a 5'-end dephospho-ribonucleoside-RNA + H(+). Functionally, self-incompatibility (SI) is the inherited ability of a flowering plant to prevent self-fertilization by discriminating between self and non-self pollen during pollination. In many species, self-incompatibility is controlled by the single, multiallelic locus S. This is Ribonuclease S-3 from Pyrus pyrifolia (Chinese pear).